A 511-amino-acid chain; its full sequence is 2'-5'-oligoadenylate synthase-like protein 1 (511 aa).

Ubiquitin-like domains are found at residues 350–429 (IQVT…ISPE) and 430–506 (IQVF…EGAA).

Belongs to the 2-5A synthase family. In terms of assembly, specifically interacts with the ligand binding domain of the thyroid receptor (TR). TRIP14 does not require the presence of thyroid hormone for its interaction. Binds MBD1.

It localises to the nucleus. Its subcellular location is the nucleolus. It is found in the cytoplasm. Functionally, does not have 2'-5'-OAS activity, but can bind double-stranded RNA. Displays antiviral activity via an alternative antiviral pathway independent of RNase L. In Mus musculus (Mouse), this protein is 2'-5'-oligoadenylate synthase-like protein 1 (Oasl1).